We begin with the raw amino-acid sequence, 145 residues long: D-aminoacyl-tRNA deacylase (145 aa).

Positions 137–138 (GP) match the Gly-cisPro motif, important for rejection of L-amino acids motif.

This sequence belongs to the DTD family. Homodimer.

It localises to the cytoplasm. The catalysed reaction is glycyl-tRNA(Ala) + H2O = tRNA(Ala) + glycine + H(+). It catalyses the reaction a D-aminoacyl-tRNA + H2O = a tRNA + a D-alpha-amino acid + H(+). Its function is as follows. An aminoacyl-tRNA editing enzyme that deacylates mischarged D-aminoacyl-tRNAs. Also deacylates mischarged glycyl-tRNA(Ala), protecting cells against glycine mischarging by AlaRS. Acts via tRNA-based rather than protein-based catalysis; rejects L-amino acids rather than detecting D-amino acids in the active site. By recycling D-aminoacyl-tRNA to D-amino acids and free tRNA molecules, this enzyme counteracts the toxicity associated with the formation of D-aminoacyl-tRNA entities in vivo and helps enforce protein L-homochirality. The sequence is that of D-aminoacyl-tRNA deacylase from Alteromonas mediterranea (strain DSM 17117 / CIP 110805 / LMG 28347 / Deep ecotype).